The sequence spans 96 residues: Small ribosomal subunit protein bS18 (96 aa).

Over residues 1–18 the composition is skewed to basic residues; that stretch reads MPPPRGKGRFGKDKRPKR. Positions 1–21 are disordered; it reads MPPPRGKGRFGKDKRPKRNTQ.

This sequence belongs to the bacterial ribosomal protein bS18 family. Part of the 30S ribosomal subunit. Forms a tight heterodimer with protein bS6.

In terms of biological role, binds as a heterodimer with protein bS6 to the central domain of the 16S rRNA, where it helps stabilize the platform of the 30S subunit. The polypeptide is Small ribosomal subunit protein bS18 (Methylibium petroleiphilum (strain ATCC BAA-1232 / LMG 22953 / PM1)).